A 227-amino-acid chain; its full sequence is Cytochrome c oxidase subunit 2 (227 aa).

The Mitochondrial intermembrane segment spans residues 1–14 (MAYPYELGFQDASS). Residues 15-45 (PIMEELLHFHDHTLMIVFLISTLVLYLITIM) traverse the membrane as a helical segment. Over 46 to 59 (LTTKLTHTSTMDAQ) the chain is Mitochondrial matrix. A helical transmembrane segment spans residues 60–87 (EIETIWTILPAIILILIALPSLRILYMM). At 88–227 (DEINSPSLTV…DFEIWSSSML (140 aa)) the chain is on the mitochondrial intermembrane side. Cu cation-binding residues include H161, C196, E198, C200, H204, and M207. Mg(2+) is bound at residue E198.

The protein belongs to the cytochrome c oxidase subunit 2 family. Component of the cytochrome c oxidase (complex IV, CIV), a multisubunit enzyme composed of 14 subunits. The complex is composed of a catalytic core of 3 subunits MT-CO1, MT-CO2 and MT-CO3, encoded in the mitochondrial DNA, and 11 supernumerary subunits COX4I, COX5A, COX5B, COX6A, COX6B, COX6C, COX7A, COX7B, COX7C, COX8 and NDUFA4, which are encoded in the nuclear genome. The complex exists as a monomer or a dimer and forms supercomplexes (SCs) in the inner mitochondrial membrane with NADH-ubiquinone oxidoreductase (complex I, CI) and ubiquinol-cytochrome c oxidoreductase (cytochrome b-c1 complex, complex III, CIII), resulting in different assemblies (supercomplex SCI(1)III(2)IV(1) and megacomplex MCI(2)III(2)IV(2)). Found in a complex with TMEM177, COA6, COX18, COX20, SCO1 and SCO2. Interacts with TMEM177 in a COX20-dependent manner. Interacts with COX20. Interacts with COX16. Requires Cu cation as cofactor.

It is found in the mitochondrion inner membrane. The catalysed reaction is 4 Fe(II)-[cytochrome c] + O2 + 8 H(+)(in) = 4 Fe(III)-[cytochrome c] + 2 H2O + 4 H(+)(out). Functionally, component of the cytochrome c oxidase, the last enzyme in the mitochondrial electron transport chain which drives oxidative phosphorylation. The respiratory chain contains 3 multisubunit complexes succinate dehydrogenase (complex II, CII), ubiquinol-cytochrome c oxidoreductase (cytochrome b-c1 complex, complex III, CIII) and cytochrome c oxidase (complex IV, CIV), that cooperate to transfer electrons derived from NADH and succinate to molecular oxygen, creating an electrochemical gradient over the inner membrane that drives transmembrane transport and the ATP synthase. Cytochrome c oxidase is the component of the respiratory chain that catalyzes the reduction of oxygen to water. Electrons originating from reduced cytochrome c in the intermembrane space (IMS) are transferred via the dinuclear copper A center (CU(A)) of subunit 2 and heme A of subunit 1 to the active site in subunit 1, a binuclear center (BNC) formed by heme A3 and copper B (CU(B)). The BNC reduces molecular oxygen to 2 water molecules using 4 electrons from cytochrome c in the IMS and 4 protons from the mitochondrial matrix. This chain is Cytochrome c oxidase subunit 2 (MT-CO2), found in Cavia aperea (Brazilian guinea pig).